Here is a 943-residue protein sequence, read N- to C-terminus: Receptor-like kinase TMK3 (943 aa).

An N-terminal signal peptide occupies residues 1-24 (MSNSHLGTLCFIISLLGLANFSLS). Residues 25–482 (QTGLDDSTMQ…ETSKKSSNVK (458 aa)) lie on the Extracellular side of the membrane. N-linked (GlcNAc...) asparagine glycosylation is present at Asn41. Cys54 and Cys61 form a disulfide bridge. LRR repeat units lie at residues 64 to 88 (SNRV…LQSL), 89 to 111 (SELV…LSGL), 112 to 134 (SRLQ…LFSG), 136 to 160 (SSLQ…VKEA), 162 to 183 (SLQN…FFGS), 186 to 210 (LPSL…FAGT), 212 to 232 (IQSL…LGNM), 233 to 254 (TSLV…DLSG), 255 to 279 (LVSL…LVSL), and 281 to 301 (SLTT…LFGK). Asn165 and Asn170 each carry an N-linked (GlcNAc...) asparagine glycan. 2 N-linked (GlcNAc...) asparagine glycosylation sites follow: Asn223 and Asn231. N-linked (GlcNAc...) asparagine glycosylation is present at Asn286. Disulfide bonds link Cys315-Cys323 and Cys353-Cys361. LRR repeat units lie at residues 363-386 (GGNI…SLAK), 387-410 (LTSL…ELTT), and 411-438 (LSKL…VTLV). Asn365 carries an N-linked (GlcNAc...) asparagine glycan. The interval 441 to 476 (GNANMGKNGPNKTSDAPGASPGSKPSGGSDGSETSK) is disordered. Asn451 carries an N-linked (GlcNAc...) asparagine glycan. Residues 454 to 467 (SDAPGASPGSKPSG) are compositionally biased toward low complexity. The chain crosses the membrane as a helical span at residues 483 to 503 (IIVPVVGGVVGALCLVGLGVC). Residues 504–943 (LYAKKRKRPA…ADSFTSVDGR (440 aa)) are Cytoplasmic-facing. The segment at 514-534 (RVQSPSSNMVIHPHHSGDNDD) is disordered. Residues 585–866 (FSEENILGRG…AHIVNVLSSL (282 aa)) enclose the Protein kinase domain. Residues 591–599 (LGRGGFGTV) and Lys613 contribute to the ATP site. Asp714 serves as the catalytic Proton acceptor. Residues 904–943 (QTADDSGSSSSAYGSKDNTQTSIPTRPSGFADSFTSVDGR) form a disordered region. Residues 906–918 (ADDSGSSSSAYGS) show a composition bias toward low complexity. Residues 919–928 (KDNTQTSIPT) are compositionally biased toward polar residues.

This sequence belongs to the protein kinase superfamily. Ser/Thr protein kinase family. Expressed in roots, leaves, stems, siliques and flowers.

Its subcellular location is the membrane. The enzyme catalyses L-seryl-[protein] + ATP = O-phospho-L-seryl-[protein] + ADP + H(+). The catalysed reaction is L-threonyl-[protein] + ATP = O-phospho-L-threonyl-[protein] + ADP + H(+). Involved in auxin signal transduction and cell expansion and proliferation regulation. This Arabidopsis thaliana (Mouse-ear cress) protein is Receptor-like kinase TMK3.